A 270-amino-acid polypeptide reads, in one-letter code: Splicing factor YJU2 (270 aa).

Positions 1-32 (MSERKVLNKYIPPDYDPSIRPPKKKKKFQGPN) are disordered. Cys48, Cys51, Cys84, and Cys87 together coordinate Zn(2+). A disordered region spans residues 251 to 270 (PNFQPPKYAKRKMEKKKVLV). Residues 258-270 (YAKRKMEKKKVLV) show a composition bias toward basic residues.

The protein belongs to the CWC16 family. YJU2 subfamily. In terms of assembly, component of the spliceosome. Present in the activated B complex, the catalytically activated B* complex which catalyzes the branching, the catalytic step 1 C complex catalyzing the exon ligation, and the postcatalytic P complex containing the ligated exons (mRNA) and the excised lariat intron. Belongs to the 40S cdc5-associated complex (or cwf complex), a spliceosome sub-complex reminiscent of a late-stage spliceosome composed of the U2, U5 and U6 snRNAs and at least brr2, cdc5, cwf2/prp3, cwf3/syf1, cwf4/syf3, cwf5/ecm2, spp42/cwf6, cwf7/spf27, cwf8, cwf9, cwf10, cwf11, cwf12, prp45/cwf13, cwf14, cwf15, cwf16, cwf17, cwf18, cwf19, cwf20, cwf21, cwf22, cwf23, cwf24, cwf25, cwf26, cyp7/cwf27, cwf28, cwf29/ist3, lea1, msl1, prp5/cwf1, prp10, prp12/sap130, prp17, prp22, sap61, sap62, sap114, sap145, slu7, smb1, smd1, smd3, smf1, smg1 and syf2.

The protein localises to the nucleus. Part of the spliceosome which catalyzes two sequential transesterification reactions, first the excision of the non-coding intron from pre-mRNA and then the ligation of the coding exons to form the mature mRNA. Plays a role in stabilizing the structure of the spliceosome catalytic core and docking of the branch helix into the active site, producing 5'-exon and lariat intron-3'-intermediates. This Schizosaccharomyces pombe (strain 972 / ATCC 24843) (Fission yeast) protein is Splicing factor YJU2 (cwf16).